A 216-amino-acid chain; its full sequence is NKG2-D type II integral membrane protein (216 aa).

At 1–51 the chain is on the cytoplasmic side; that stretch reads MGWIRGRRSRHSWEMSEFHNYNLDLKKSDFSTRWQKQRCPVVKSKCRENAS. A helical; Signal-anchor for type II membrane protein transmembrane segment spans residues 52–72; it reads PFFFCCFIAVAMGIRFIIMVT. The Extracellular portion of the chain corresponds to 73-216; sequence IWSAVFLNSL…NTYICMQRTV (144 aa). 2 disulfides stabilise this stretch: C96-C105 and C99-C110. One can recognise a C-type lectin domain in the interval 98–213; that stretch reads PCPKNWICYK…STPNTYICMQ (116 aa). 4 N-linked (GlcNAc...) asparagine glycosylation sites follow: N115, N131, N163, and N202. Disulfide bonds link C127/C211 and C189/C203.

As to quaternary structure, homodimer; disulfide-linked. Heterohexamer composed of two subunits of KLRK1 and four subunits of HCST/DAP10. Interacts (via transmembrane domain) with HCST/DAP10 (via transmembrane domain); the interaction is required for KLRK1 NK cell surface and induces NK cell-mediated cytotoxicity. Can form disulfide-bonded heterodimer with CD94. Interacts with CEACAM1; recruits PTPN6 that dephosphorylates VAV1. In terms of tissue distribution, natural killer cells.

Its subcellular location is the cell membrane. Its function is as follows. Functions as an activating and costimulatory receptor involved in immunosurveillance upon binding to various cellular stress-inducible ligands displayed at the surface of autologous tumor cells and virus-infected cells. Provides both stimulatory and costimulatory innate immune responses on activated killer (NK) cells, leading to cytotoxic activity. Acts as a costimulatory receptor for T-cell receptor (TCR) in CD8(+) T-cell-mediated adaptive immune responses by amplifying T-cell activation. Stimulates perforin-mediated elimination of ligand-expressing tumor cells. Signaling involves calcium influx, culminating in the expression of TNF-alpha. Participates in NK cell-mediated bone marrow graft rejection. May play a regulatory role in differentiation and survival of NK cells. Binds to ligands belonging to various subfamilies of MHC class I-related glycoproteins. This chain is NKG2-D type II integral membrane protein (KLRK1), found in Pan troglodytes (Chimpanzee).